A 342-amino-acid chain; its full sequence is Acetoin:2,6-dichlorophenolindophenol oxidoreductase subunit beta (342 aa).

In terms of assembly, tetramer of 2 alpha and 2 beta subunits.

It functions in the pathway ketone degradation; acetoin degradation. Catalyzes the 2,6-dichlorophenolindophenol-dependent cleavage of acetoin into acetate and acetaldehyde. The sequence is that of Acetoin:2,6-dichlorophenolindophenol oxidoreductase subunit beta (acoB) from Bacillus subtilis (strain 168).